Consider the following 520-residue polypeptide: Developmental regulatory protein wetA (520 aa).

Disordered regions lie at residues 49 to 72 (GDLP…NEWS), 104 to 165 (VPSR…MRSS), 236 to 295 (QSPS…WQSD), 367 to 453 (DHSF…GSNK), and 471 to 496 (LTGV…RRRK). Composition is skewed to polar residues over residues 63-72 (SPQPWSNEWS), 104-114 (VPSRPTASHGL), and 155-165 (QSFSPSLMRSS). Residues 237-251 (SPSVSMPSPSIAMSA) show a composition bias toward low complexity. Positions 252-261 (RQQQHYIAQP) are enriched in polar residues. Positions 262 to 295 (SSSSLTNSSPSSADDIFSSSHSSDPHSLSSWQSD) are enriched in low complexity. Residues 367-401 (DHSFSSSNMLPATPQKFDTSFNTSQVHNVSRSPSL) are compositionally biased toward polar residues. The segment covering 420-429 (PTHRRTHSRK) has biased composition (basic residues). Over residues 436–453 (NAPKPAKASGSSSRGSNK) the composition is skewed to low complexity.

The protein belongs to the wetA family.

In terms of biological role, brlA, abaA and wetA are pivotal regulators of conidiophore development and conidium maturation. They act individually and together to regulate their own expression and that of numerous other sporulation-specific genes. Responsible for activating a set of genes whose products make up the final two conidial wall layers or direct their assembly and though this activity is responsible for acquisition of spore dormancy. This Penicillium rubens (strain ATCC 28089 / DSM 1075 / NRRL 1951 / Wisconsin 54-1255) (Penicillium chrysogenum) protein is Developmental regulatory protein wetA.